Reading from the N-terminus, the 241-residue chain is Small ribosomal subunit protein uS2 (241 aa).

Belongs to the universal ribosomal protein uS2 family.

The polypeptide is Small ribosomal subunit protein uS2 (Cronobacter sakazakii (strain ATCC BAA-894) (Enterobacter sakazakii)).